Reading from the N-terminus, the 81-residue chain is METRAFWTTLLLVLVAGSSCKAQEFVGLSPSQCMVPANVRVDCGYPTVTSEQCNNRGCCFDSSIPNVPWCFKPLQETECTF.

An N-terminal signal peptide occupies residues 1-22; it reads METRAFWTTLLLVLVAGSSCKA. In terms of domain architecture, P-type spans 31–74; it reads SQCMVPANVRVDCGYPTVTSEQCNNRGCCFDSSIPNVPWCFKPL. 3 cysteine pairs are disulfide-bonded: C33-C59, C43-C58, and C53-C70.

Monomer. Homodimer; disulfide-linked. As to expression, expressed in goblet cells of the intestines, and colon, in paraventricular hypothalamus and supraoptic nuclei. Weakly expressed in gastric epithelial cells (at protein level). Expressed by goblet cells of small and large intestinal epithelia, kidney and stomach. Expressed in the paraventricular hypothalamus, arcuate nucleus and amygdala of the brain. Weakly expressed in gastric epithelial cells.

It is found in the secreted. The protein resides in the extracellular space. It localises to the extracellular matrix. The protein localises to the cytoplasm. Involved in the maintenance and repair of the intestinal mucosa. Promotes the mobility of epithelial cells in healing processes (motogen). The sequence is that of Trefoil factor 3 (Tff3) from Rattus norvegicus (Rat).